The following is a 426-amino-acid chain: Putative FBD-associated F-box protein At5g53635 (426 aa).

The 45-residue stretch at 1 to 45 (MISQLPDPLICHILSHLPIKDLVTTRVLSTRWRSLWLWLPCLELN) folds into the F-box domain. The FBD domain occupies 353–405 (MIQFGSSLVPECLLSSLEFVDIRIPFRGHLEVMKLVRYFLENSAILKKLSLDH).

The chain is Putative FBD-associated F-box protein At5g53635 from Arabidopsis thaliana (Mouse-ear cress).